The primary structure comprises 634 residues: MVNDKILYDSCKTFNIDASSAQSLIESGANPLYEYDGETPLKAYVTKKNNNIKNDVVILLLSSVDYKNINDFDIFEYLCSDNIDIDLLKLLISKGIEINSIKNGINIVEKYATTSNPNVDVFKLLLDKGIPTCSNIQYGYKIKIEQIRRAGEYYNWDDELDDYDYDYTTDYDDRMGKTVLYYYIITRSQDGYATSLDVINYLISHKKEMRYYTYREHTTLYYYLDKCDIKREIFDALFDSNYSGHELMNILSNYLRKQFRKKNHKIDNYIVDQLLFDRDTFYILELCNSLRNNILISTILKRYTDSIQDLLLEYVSYHTVYINVIKCMIDEGATLYRFKHINKYFQKFGNRDPKVVEYILKNGNLVVDNDNDDNLINIMPLFPTFSMRELDVLSILKLCKPYIDDINKIDKHGCSILYHCIKSHSVSLVEWLIDNGADINIITKYGFTCITICVILADKYIPEIAELYIKILEIILSKLPTIECIKKTVDYLDDHRYLFIGGNNKSLLKICIKYFILVDYKYTCSMYPSYIEFITDCEKEIADMRQIKINGTDMLTVMYMLNKPTKKRYVNNPIFTDWANKQYKFYNQIIYNANKLIEQSKKIDDMIEEVSIDDNRLSTLPLEIRHLIFSYAFL.

6 ANK repeats span residues 36 to 69 (DGET…YKNI), 70 to 100 (NDFD…EINS), 103 to 134 (NGIN…PTCS), 175 to 211 (MGKT…EMRY), 307 to 337 (IQDL…TLYR), and 412 to 441 (HGCS…DINI).

Belongs to the orthopoxvirus OPG025 family. In terms of assembly, interacts with components of host SCF complex CUL1 and SKP1 and components of the cullin deneddylation/COP9 signalosome complex subunits COPS7A and COPS7B.

Plays a role in the inhibition of host immune repsonse by counteracting the action of interferons on early events in the viral replication cycle. In Vaccinia virus (strain Western Reserve) (VACV), this protein is Ankyrin repeat protein OPG025 (OPG035).